Here is a 357-residue protein sequence, read N- to C-terminus: Peptide chain release factor 1 (357 aa).

At Q232 the chain carries N5-methylglutamine. Basic and acidic residues predominate over residues 284 to 304 (AERAAERKGQIGSGDRSERIR). Positions 284 to 308 (AERAAERKGQIGSGDRSERIRTYNY) are disordered.

This sequence belongs to the prokaryotic/mitochondrial release factor family. In terms of processing, methylated by PrmC. Methylation increases the termination efficiency of RF1.

Its subcellular location is the cytoplasm. Peptide chain release factor 1 directs the termination of translation in response to the peptide chain termination codons UAG and UAA. The polypeptide is Peptide chain release factor 1 (Maricaulis maris (strain MCS10) (Caulobacter maris)).